Consider the following 933-residue polypeptide: Phospholipase D2 (933 aa).

2 disordered regions span residues 1 to 20 (MAAT…SSQL) and 134 to 160 (SPAP…RRTA). The PX domain occupies 65–195 (VIAQVVGTER…TEFLEVSQLS (131 aa)). One can recognise a PH domain in the interval 203-311 (KGLEGVIRKR…WAQEITELAQ (109 aa)). 2 PLD phosphodiesterase domains span residues 437–464 (TLWA…AYGR) and 751–778 (ELIY…NDRS). Residues 441 to 788 (HHEKLLVVDQ…LLGKRDSELA (348 aa)) are catalytic.

Belongs to the phospholipase D family. As to quaternary structure, interacts with PIP5K1B. Interacts with EGFR. In terms of processing, phosphorylated by FGR.

It localises to the cell membrane. The catalysed reaction is a 1,2-diacyl-sn-glycero-3-phosphocholine + H2O = a 1,2-diacyl-sn-glycero-3-phosphate + choline + H(+). The enzyme catalyses 1,2-dihexadecanoyl-sn-glycero-3-phosphocholine + H2O = 1,2-dihexadecanoyl-sn-glycero-3-phosphate + choline + H(+). In terms of biological role, function as phospholipase selective for phosphatidylcholine. May have a role in signal-induced cytoskeletal regulation and/or endocytosis. This chain is Phospholipase D2 (PLD2), found in Bos taurus (Bovine).